A 479-amino-acid polypeptide reads, in one-letter code: Rifampicin monooxygenase (479 aa).

FAD contacts are provided by Thr12, Asp31, Lys32, Arg41, Gln98, Val122, Thr156, Asp278, Leu291, and Asn292.

The protein belongs to the rifampicin monooxygenase family. It depends on FAD as a cofactor.

The enzyme catalyses rifampicin + NADPH + O2 = rifampicin para-naphthoquinone carboxamide + NADP(+) + H2O + H(+). It catalyses the reaction rifampicin + NADH + O2 = rifampicin para-naphthoquinone carboxamide + NAD(+) + H2O + H(+). Monooxygenase that can modify rifampicin, thereby inactivating its antibiotic activity. The polypeptide is Rifampicin monooxygenase (Rhodococcus hoagii (Corynebacterium equii)).